The following is a 179-amino-acid chain: Transcription factor NF-E4 (179 aa).

Lysine 43 carries the post-translational modification N6-acetyllysine. The tract at residues 100 to 179 (AMKATGPHNA…QLPSLHLSQG (80 aa)) is disordered. Composition is skewed to polar residues over residues 143 to 153 (LSQSNPPTRIS) and 163 to 179 (ALEQTPQQLPSLHLSQG).

Component of the SSP (stage selector protein) complex, which appears to be a heteromer of TFCP2 and 2 copies of NFE4. Interacts with HDAC1 and PCAF. Isoform 2 interacts with TFCP2. Acetylation at Lys-43 prolongs the protein half-life by preventing ubiquitin-mediated degradation and reduces the interaction between NF-E4 and HDAC1, potentially maximizing the activating ability of the factor at the gamma-promoter. In terms of processing, ubiquitinated; leading to its degradation by the proteasome. Acetylation at Lys-43 prevents ubiquitination. In terms of tissue distribution, specifically expressed in fetal liver, cord blood and bone marrow. Also expressed in the K562 and HEL cell lines, which constitutively express the fetal globin genes.

The protein resides in the nucleus. Functions as part of the SSP (stage selector protein) complex, a complex that contributes to the preferential expression of the gamma-gene in fetal erythroid cells by facilitating the interaction of the gamma-globin genes with enhancer elements contained in the locus control region (LCR). The complex binds to the stage selector element (SSE) in the proximal gamma-globin promoter. In contrast, isoform 2 acts as a repressor of gamma-globin gene expression by preventing NFE2 and RNA polymerase II recruitment to the promoter. In Homo sapiens (Human), this protein is Transcription factor NF-E4 (NFE4).